We begin with the raw amino-acid sequence, 858 residues long: Heat shock protein 105 kDa (858 aa).

N-acetylserine is present on S2. An N6-acetyllysine modification is found at K471. 2 disordered regions span residues K500–A584 and C796–D858. The segment covering E504–M514 has biased composition (acidic residues). Phosphoserine is present on residues S509 and S510. Positions Q532–S554 are enriched in polar residues. S557 is subject to Phosphoserine. A Phosphothreonine modification is found at T561. Basic and acidic residues-rich tracts occupy residues E563–A584 and P805–R814. S809 is modified (phosphoserine). At T815 the chain carries Phosphothreonine. Over residues I821–N832 the composition is skewed to basic and acidic residues. Residues E849–D858 show a composition bias toward polar residues.

It belongs to the heat shock protein 70 family. Interacts with HSPA8/HSC70. Interacts with HSPA1A (via NBD) and HSPA1B (via NBD). Post-translationally, phosphorylation on Ser-509 may be important for regulation of the HSPA8/HSC70 chaperone activity.

It is found in the cytoplasm. Functionally, acts as a nucleotide-exchange factor (NEF) for chaperone proteins HSPA1A and HSPA1B, promoting the release of ADP from HSPA1A/B thereby triggering substrate release. Prevents the aggregation of denatured proteins in cells under severe stress, on which the ATP levels decrease markedly. Inhibits HSPA8/HSC70 ATPase and chaperone activities. The protein is Heat shock protein 105 kDa (HSPH1) of Pongo abelii (Sumatran orangutan).